The following is a 296-amino-acid chain: GTPase Era (296 aa).

The 168-residue stretch at 3 to 170 folds into the Era-type G domain; it reads KSGFVTIVGR…KELMFKYIPE (168 aa). The tract at residues 11–18 is G1; sequence GRPNVGKS. Residue 11 to 18 coordinates GTP; sequence GRPNVGKS. Residues 37–41 form a G2 region; that stretch reads QTTRN. Positions 58–61 are G3; sequence DTPG. Residues 58 to 62 and 120 to 123 each bind GTP; these read DTPGI and NKID. The segment at 120–123 is G4; it reads NKID. Positions 149–151 are G5; it reads ISA. Residues 201–278 enclose the KH type-2 domain; it reads LSEEVPHGIA…YIRLWVKVKE (78 aa).

This sequence belongs to the TRAFAC class TrmE-Era-EngA-EngB-Septin-like GTPase superfamily. Era GTPase family. In terms of assembly, monomer.

It localises to the cytoplasm. The protein resides in the cell membrane. Its function is as follows. An essential GTPase that binds both GDP and GTP, with rapid nucleotide exchange. Plays a role in 16S rRNA processing and 30S ribosomal subunit biogenesis and possibly also in cell cycle regulation and energy metabolism. The chain is GTPase Era from Clostridium botulinum (strain ATCC 19397 / Type A).